Here is a 398-residue protein sequence, read N- to C-terminus: Selenide, water dikinase (398 aa).

The segment at 1 to 21 (MSHKRPQSSAGESNGAVDLKT) is disordered. Residue C46 is part of the active site. ATP is bound by residues K49, 72 to 74 (GMD), D97, D120, and 171 to 174 (GGQT). Residue D74 participates in Mg(2+) binding. D120 contacts Mg(2+). Position 278 (D278) interacts with Mg(2+).

It belongs to the selenophosphate synthase 1 family. Class I subfamily. Homodimer. Mg(2+) is required as a cofactor.

It carries out the reaction hydrogenselenide + ATP + H2O = selenophosphate + AMP + phosphate + 2 H(+). Functionally, synthesizes selenophosphate from selenide and ATP. The chain is Selenide, water dikinase from Leishmania major.